The following is a 986-amino-acid chain: Vacuolar membrane protease (986 aa).

At 1 to 20 (MATPRAQKFNPIAFTPGPVT) the chain is on the cytoplasmic side. A helical transmembrane segment spans residues 21-41 (LITTIVYLALLIPILVISLVV). At 42-392 (PPAPETSPEG…AFAVFRLHTL (351 aa)) the chain is on the vacuolar side. N-linked (GlcNAc...) asparagine glycans are attached at residues N53, N116, and N119. Zn(2+) is bound by residues H175 and D187. E221 serves as the catalytic Proton acceptor. Position 222 (E222) interacts with Zn(2+). The N-linked (GlcNAc...) asparagine glycan is linked to N238. Residues E247 and H320 each contribute to the Zn(2+) site. A helical membrane pass occupies residues 393–413 (FALSVTLLIVAPLVIFITAIV). Residues 414–447 (LSKTDRMYLFSMSKSLGGTDERVSLRGLRGLFRT) are Cytoplasmic-facing. Residues 448 to 468 (PIILAVATVIPIGLAYLLEKV) form a helical membrane-spanning segment. Over 469 to 477 (NPYIVHSSQ) the chain is Vacuolar. The chain crosses the membrane as a helical span at residues 478 to 498 (FSVWSMMISVWIFLAWFLACA). The Cytoplasmic segment spans residues 499-509 (ADFFRPSALHR). Residues 510–530 (AYSYTWIFIATWVMLVINTVY) traverse the membrane as a helical segment. Topologically, residues 531–534 (ANQK) are vacuolar. Residues 535-555 (GIAAGYFVFFYFSGSFLATWV) traverse the membrane as a helical segment. At 556–665 (SYLELFALPR…WSWTLPRWTW (110 aa)) the chain is on the cytoplasmic side. Residues 595–620 (ELPSDTGPHAEYPGDADETDPTESTS) form a disordered region. The chain crosses the membrane as a helical span at residues 666–686 (VLQLLLLAPIVLILVGQLALF). Topologically, residues 687-702 (LTTSMSQVGSDGVSTF) are vacuolar. Residues 703-723 (IVYLACAVFTTLLFAPLFPFI) traverse the membrane as a helical segment. Residues 724–729 (HRFTYH) are Cytoplasmic-facing. A helical transmembrane segment spans residues 730-750 (IPTFLFLVFVGTLIYNLVAFP). Over 751-986 (FSPANRLKMF…VEASHGITIQ (236 aa)) the chain is Vacuolar. Residues N797, N840, and N948 are each glycosylated (N-linked (GlcNAc...) asparagine).

It belongs to the peptidase M28 family. Zn(2+) is required as a cofactor.

The protein localises to the vacuole membrane. In terms of biological role, may be involved in vacuolar sorting and osmoregulation. The chain is Vacuolar membrane protease from Blastomyces gilchristii (strain SLH14081) (Blastomyces dermatitidis).